Here is a 155-residue protein sequence, read N- to C-terminus: Ribonuclease H (155 aa).

The region spanning 1 to 146 is the RNase H type-1 domain; the sequence is MPELFAYTDG…ADELARAGMK (146 aa). Mg(2+) contacts are provided by aspartate 9, glutamate 52, aspartate 74, and aspartate 138.

The protein belongs to the RNase H family. As to quaternary structure, monomer. Mg(2+) serves as cofactor.

It is found in the cytoplasm. The catalysed reaction is Endonucleolytic cleavage to 5'-phosphomonoester.. Endonuclease that specifically degrades the RNA of RNA-DNA hybrids. The polypeptide is Ribonuclease H (Ruegeria pomeroyi (strain ATCC 700808 / DSM 15171 / DSS-3) (Silicibacter pomeroyi)).